Here is a 372-residue protein sequence, read N- to C-terminus: PqqA peptide cyclase (372 aa).

The Radical SAM core domain maps to Ala-4 to Arg-220. The [4Fe-4S] cluster site is built by Cys-18, Cys-22, and Cys-25.

This sequence belongs to the radical SAM superfamily. PqqE family. As to quaternary structure, interacts with PqqD. The interaction is necessary for activity of PqqE. [4Fe-4S] cluster serves as cofactor.

It catalyses the reaction [PQQ precursor protein] + S-adenosyl-L-methionine = E-Y cross-linked-[PQQ precursor protein] + 5'-deoxyadenosine + L-methionine + H(+). It functions in the pathway cofactor biosynthesis; pyrroloquinoline quinone biosynthesis. Catalyzes the cross-linking of a glutamate residue and a tyrosine residue in the PqqA protein as part of the biosynthesis of pyrroloquinoline quinone (PQQ). The polypeptide is PqqA peptide cyclase (Xanthomonas axonopodis pv. citri (strain 306)).